A 506-amino-acid polypeptide reads, in one-letter code: MPNEIFTINLNAQAIIPEAFILLGIVGTLLVDLAGEKTASKWAPIICYLSIGSSLFSLALQWSNPVNSAFLGSFNSDNLAIAFRAIIALSTLVSLLISWRYTEQSGSPIGEFAAIVLSATLGAMLLCGSTDLISIFISLETLSVASYLLSGYLKRDPRSSEAALKYLLVGSAAAAVYLYGSSFLYGLSGSTNLATIGLEIINKPSFITSLALVFVLSTVAFKIAAVPFHQWTPDVYEGSPTPVVAFLSVGSKTAGFAFAIRILSTTFSSFDEEWKLLFTILAILSMALGNVVALAQTSMKRMLAYSSIGQAGFVMIGIVSGTQDGLSATVLYLAAYLFMNLGAFSCVILFSLRTGSDRILDYSGLYQKDPLITLGLSLCLLSLGGLPPMLGFFGKIYLFFAGWANHQYLLVIIGLVTSVISIYYYISVIKMMVVKEPQEASEIVKSYPEINWGIVGMPPLRVALYTCVAVTALGGILSNPLFKLANTAVSETPFLQEIIAMANNIS.

Transmembrane regions (helical) follow at residues 14 to 34, 42 to 62, 79 to 99, 108 to 128, 132 to 152, 167 to 187, 206 to 226, 240 to 260, 276 to 296, 302 to 322, 330 to 350, 374 to 394, and 409 to 429; these read AIIP…VDLA, WAPI…ALQW, LAIA…LISW, PIGE…LLCG, LISI…LSGY, LLVG…LYGL, FITS…IAAV, PTPV…AFAI, LLFT…ALAQ, MLAY…VSGT, VLYL…VILF, LGLS…GFFG, and LLVI…ISVI.

The protein belongs to the complex I subunit 2 family. In terms of assembly, NDH-1 can be composed of about 15 different subunits; different subcomplexes with different compositions have been identified which probably have different functions.

It localises to the cellular thylakoid membrane. The catalysed reaction is a plastoquinone + NADH + (n+1) H(+)(in) = a plastoquinol + NAD(+) + n H(+)(out). The enzyme catalyses a plastoquinone + NADPH + (n+1) H(+)(in) = a plastoquinol + NADP(+) + n H(+)(out). Its function is as follows. NDH-1 shuttles electrons from an unknown electron donor, via FMN and iron-sulfur (Fe-S) centers, to quinones in the respiratory and/or the photosynthetic chain. The immediate electron acceptor for the enzyme in this species is believed to be plastoquinone. Couples the redox reaction to proton translocation, and thus conserves the redox energy in a proton gradient. Cyanobacterial NDH-1 also plays a role in inorganic carbon-concentration. In Prochlorococcus marinus (strain MIT 9312), this protein is NAD(P)H-quinone oxidoreductase subunit 2.